The chain runs to 326 residues: 4-hydroxythreonine-4-phosphate dehydrogenase (326 aa).

His-134 and Thr-135 together coordinate substrate. A divalent metal cation-binding residues include His-164, His-209, and His-264. Substrate is bound by residues Lys-272, Asn-281, and Arg-290.

Belongs to the PdxA family. As to quaternary structure, homodimer. It depends on Zn(2+) as a cofactor. Mg(2+) serves as cofactor. The cofactor is Co(2+).

The protein resides in the cytoplasm. The catalysed reaction is 4-(phosphooxy)-L-threonine + NAD(+) = 3-amino-2-oxopropyl phosphate + CO2 + NADH. The protein operates within cofactor biosynthesis; pyridoxine 5'-phosphate biosynthesis; pyridoxine 5'-phosphate from D-erythrose 4-phosphate: step 4/5. In terms of biological role, catalyzes the NAD(P)-dependent oxidation of 4-(phosphooxy)-L-threonine (HTP) into 2-amino-3-oxo-4-(phosphooxy)butyric acid which spontaneously decarboxylates to form 3-amino-2-oxopropyl phosphate (AHAP). The polypeptide is 4-hydroxythreonine-4-phosphate dehydrogenase (Colwellia psychrerythraea (strain 34H / ATCC BAA-681) (Vibrio psychroerythus)).